A 206-amino-acid chain; its full sequence is Ras-related protein Ral-A (206 aa).

Residue 21–28 participates in GTP binding; that stretch reads GSGGVGKS. Residues 43–51 carry the Effector region motif; sequence YEPTKADSY. GTP is bound by residues 68 to 72 and 127 to 130; these read DTAGQ and NKSD. Position 194 is a phosphoserine (serine 194). Cysteine 203 carries the cysteine methyl ester modification. Cysteine 203 is lipidated: S-geranylgeranyl cysteine. A propeptide spans 204-206 (removed in mature form); sequence CIL.

The protein belongs to the small GTPase superfamily. Ras family. As to quaternary structure, interacts (via effector domain) with RALBP1; during mitosis, recruits RALBP1 to the mitochondrion where it promotes DNM1L phosphorylation and mitochondrial fission. Interacts with EXOC2/Sec5 and EXOC8/Exo84; binding to EXOC2 and EXOC8 is mutually exclusive. Interacts with Clostridium exoenzyme C3. Interacts with RALGPS1. Interacts with LPAR1 and LPAR2. Interacts with GRK2 in response to LPAR1 activation. RALA and GRK2 binding to LPAR1 is mutually exclusive. Interacts with CDC42. In terms of processing, prenylation is essential for membrane localization. Phosphorylated. Phosphorylation at Ser-194 by AURKA/Aurora kinase A, during mitosis, induces RALA localization to the mitochondrion where it regulates mitochondrial fission.

The protein localises to the cell membrane. It localises to the cleavage furrow. The protein resides in the midbody. It is found in the midbody ring. Its subcellular location is the mitochondrion. It carries out the reaction GTP + H2O = GDP + phosphate + H(+). With respect to regulation, alternates between an inactive form bound to GDP and an active form bound to GTP. Activated by a guanine nucleotide-exchange factor (GEF) and inactivated by a GTPase-activating protein (GAP). Multifunctional GTPase involved in a variety of cellular processes including gene expression, cell migration, cell proliferation, oncogenic transformation and membrane trafficking. Accomplishes its multiple functions by interacting with distinct downstream effectors. Acts as a GTP sensor for GTP-dependent exocytosis of dense core vesicles. Key regulator of LPAR1 signaling and competes with GRK2 for binding to LPAR1 thus affecting the signaling properties of the receptor. Required for anchorage-independent proliferation of transformed cells. The RALA-exocyst complex regulates integrin-dependent membrane raft exocytosis and growth signaling. During mitosis, supports the stabilization and elongation of the intracellular bridge between dividing cells. Cooperates with EXOC2 to recruit other components of the exocyst to the early midbody. During mitosis, also controls mitochondrial fission by recruiting to the mitochondrion RALBP1, which mediates the phosphorylation and activation of DNM1L by the mitotic kinase cyclin B-CDK1. This chain is Ras-related protein Ral-A (Rala), found in Mus musculus (Mouse).